The chain runs to 317 residues: Transaldolase (317 aa).

Lys132 serves as the catalytic Schiff-base intermediate with substrate.

This sequence belongs to the transaldolase family. Type 1 subfamily. Homodimer.

The protein localises to the cytoplasm. It catalyses the reaction D-sedoheptulose 7-phosphate + D-glyceraldehyde 3-phosphate = D-erythrose 4-phosphate + beta-D-fructose 6-phosphate. The protein operates within carbohydrate degradation; pentose phosphate pathway; D-glyceraldehyde 3-phosphate and beta-D-fructose 6-phosphate from D-ribose 5-phosphate and D-xylulose 5-phosphate (non-oxidative stage): step 2/3. In terms of biological role, transaldolase is important for the balance of metabolites in the pentose-phosphate pathway. In Photorhabdus laumondii subsp. laumondii (strain DSM 15139 / CIP 105565 / TT01) (Photorhabdus luminescens subsp. laumondii), this protein is Transaldolase.